Consider the following 385-residue polypeptide: MNHPYSWIEDSLKTLHRANWYRRVKTIQGRGGAVIELEGRSLINFASNDYLGLAADERMIAAAIAATQRYGTGSTGSRLLSGHRDLHRDLELAIASFKNSEDAIVFSSGYLANLGTITCLVGQKDLILGDQYNHSSLKNGAKLSGATVKEYRHNSLEDLENQLLAHRHHYRHCLLLTDTVFSMDGDICPLAGILALAEIYNCMVLVDEAHATGVMGENGTGCVEYCGCQGRELIQMGTLSKALGSLGGYVTGNAKIIDFIRNRAATWIYTTGLSPADTAAARMALEIIRLEPERRQRLHQNINFVKSKLNNLNILPSEAAILCLPVANPGQALELSQKLLEKGIFAPAIRPPTVPTSRLRFTAMATHSLAHLEVLVQSIGESFPT.

Arg22 serves as a coordination point for substrate. 109 to 110 (GY) provides a ligand contact to pyridoxal 5'-phosphate. His134 contributes to the substrate binding site. Pyridoxal 5'-phosphate is bound by residues Ser182, 207 to 210 (DEAH), and 238 to 241 (TLSK). Residue Lys241 is modified to N6-(pyridoxal phosphate)lysine. Residue Thr353 participates in substrate binding.

Belongs to the class-II pyridoxal-phosphate-dependent aminotransferase family. BioF subfamily. In terms of assembly, homodimer. Pyridoxal 5'-phosphate is required as a cofactor.

The catalysed reaction is 6-carboxyhexanoyl-[ACP] + L-alanine + H(+) = (8S)-8-amino-7-oxononanoate + holo-[ACP] + CO2. Its pathway is cofactor biosynthesis; biotin biosynthesis. Functionally, catalyzes the decarboxylative condensation of pimeloyl-[acyl-carrier protein] and L-alanine to produce 8-amino-7-oxononanoate (AON), [acyl-carrier protein], and carbon dioxide. The polypeptide is Putative 8-amino-7-oxononanoate synthase (bioF) (Microcystis aeruginosa (strain NIES-843 / IAM M-2473)).